Reading from the N-terminus, the 259-residue chain is uncharacterized protein (259 aa).

The HD domain occupies 51–173 (GKTHAKIVAN…IAVADGTDMT (123 aa)).

This is an uncharacterized protein from Methanocaldococcus jannaschii (strain ATCC 43067 / DSM 2661 / JAL-1 / JCM 10045 / NBRC 100440) (Methanococcus jannaschii).